Here is a 342-residue protein sequence, read N- to C-terminus: Holliday junction branch migration complex subunit RuvB (342 aa).

A large ATPase domain (RuvB-L) region spans residues 1–184; that stretch reads MDNERVITAV…FGIVQRLEFY (184 aa). Residues isoleucine 23, arginine 24, glycine 65, lysine 68, threonine 69, threonine 70, 131–133, arginine 174, tyrosine 184, and arginine 221 contribute to the ATP site; that span reads EDY. Residue threonine 69 participates in Mg(2+) binding. A small ATPAse domain (RuvB-S) region spans residues 185-255; sequence SVDDLSGIVS…IAQRALDMLE (71 aa). A head domain (RuvB-H) region spans residues 258-342; it reads SCGLDGTDRR…PRQDGDLFND (85 aa). Residues arginine 313 and arginine 318 each contribute to the DNA site.

This sequence belongs to the RuvB family. As to quaternary structure, homohexamer. Forms an RuvA(8)-RuvB(12)-Holliday junction (HJ) complex. HJ DNA is sandwiched between 2 RuvA tetramers; dsDNA enters through RuvA and exits via RuvB. An RuvB hexamer assembles on each DNA strand where it exits the tetramer. Each RuvB hexamer is contacted by two RuvA subunits (via domain III) on 2 adjacent RuvB subunits; this complex drives branch migration. In the full resolvosome a probable DNA-RuvA(4)-RuvB(12)-RuvC(2) complex forms which resolves the HJ.

It is found in the cytoplasm. The catalysed reaction is ATP + H2O = ADP + phosphate + H(+). Functionally, the RuvA-RuvB-RuvC complex processes Holliday junction (HJ) DNA during genetic recombination and DNA repair, while the RuvA-RuvB complex plays an important role in the rescue of blocked DNA replication forks via replication fork reversal (RFR). RuvA specifically binds to HJ cruciform DNA, conferring on it an open structure. The RuvB hexamer acts as an ATP-dependent pump, pulling dsDNA into and through the RuvAB complex. RuvB forms 2 homohexamers on either side of HJ DNA bound by 1 or 2 RuvA tetramers; 4 subunits per hexamer contact DNA at a time. Coordinated motions by a converter formed by DNA-disengaged RuvB subunits stimulates ATP hydrolysis and nucleotide exchange. Immobilization of the converter enables RuvB to convert the ATP-contained energy into a lever motion, pulling 2 nucleotides of DNA out of the RuvA tetramer per ATP hydrolyzed, thus driving DNA branch migration. The RuvB motors rotate together with the DNA substrate, which together with the progressing nucleotide cycle form the mechanistic basis for DNA recombination by continuous HJ branch migration. Branch migration allows RuvC to scan DNA until it finds its consensus sequence, where it cleaves and resolves cruciform DNA. In Alcanivorax borkumensis (strain ATCC 700651 / DSM 11573 / NCIMB 13689 / SK2), this protein is Holliday junction branch migration complex subunit RuvB.